The chain runs to 544 residues: Membrane protein insertase YidC (544 aa).

A helical transmembrane segment spans residues 4 to 24 (KALLALVLSAAVLLIYQIFIY). The interval 44-78 (NPAAPVSPQTPADEPSSGSAANPETAAALPVDGTE) is disordered. The next 3 membrane-spanning stretches (helical) occupy residues 363–383 (NYGI…WPLG), 434–454 (LPMI…LYAI), and 508–528 (PVIF…YWLF).

The protein belongs to the OXA1/ALB3/YidC family. Type 1 subfamily. As to quaternary structure, interacts with the Sec translocase complex via SecD. Specifically interacts with transmembrane segments of nascent integral membrane proteins during membrane integration.

Its subcellular location is the cell inner membrane. In terms of biological role, required for the insertion and/or proper folding and/or complex formation of integral membrane proteins into the membrane. Involved in integration of membrane proteins that insert both dependently and independently of the Sec translocase complex, as well as at least some lipoproteins. Aids folding of multispanning membrane proteins. This is Membrane protein insertase YidC from Syntrophus aciditrophicus (strain SB).